An 85-amino-acid chain; its full sequence is MALSTRIQAACLLLLLLASVASVSVLPHQTGQLTDLRAQDTAGAEAGLQPTLQLRRLRRRDTHFPICIFCCGCCKTPKCGLCCKT.

Residues 1–22 (MALSTRIQAACLLLLLLASVAS) form the signal peptide. The propeptide occupies 23-54 (VSVLPHQTGQLTDLRAQDTAGAEAGLQPTLQL). 4 cysteine pairs are disulfide-bonded: cysteine 67–cysteine 83, cysteine 70–cysteine 73, cysteine 71–cysteine 79, and cysteine 74–cysteine 82.

The protein belongs to the hepcidin family. As to quaternary structure, interacts with SLC40A1; this interaction promotes SLC40A1 rapid ubiquitination.

The protein resides in the secreted. Liver-produced hormone that constitutes the main circulating regulator of iron absorption and distribution across tissues. Acts by promoting endocytosis and degradation of ferroportin/SLC40A1, leading to the retention of iron in iron-exporting cells and decreased flow of iron into plasma. Controls the major flows of iron into plasma: absorption of dietary iron in the intestine, recycling of iron by macrophages, which phagocytose old erythrocytes and other cells, and mobilization of stored iron from hepatocytes. Its function is as follows. Has strong antimicrobial activity against E.coli ML35P N.cinerea and weaker against S.epidermidis, S.aureus and group b streptococcus bacteria. Active against the fungus C.albicans. No activity against P.aeruginosa. This chain is Hepcidin (HAMP), found in Canis lupus familiaris (Dog).